The chain runs to 1143 residues: Disease resistance protein Pikm1-TS (1143 aa).

The structured coiled coil (CC) domain stretch occupies residues 1–190 (MEAAAMAVTA…PLRIMGGEMQ (190 aa)). The HMA domain maps to 189–258 (MQKIVFKIPM…KVGPAMFLEV (70 aa)). Residues 191-264 (KIVFKIPMVD…FLEVSQVKED (74 aa)) form an HMA-like domain region. Positions 282-570 (HEVKTICILG…WIAEGFVSEE (289 aa)) constitute an NB-ARC domain. LRR repeat units lie at residues 681-706 (FKRL…ICEQ), 708-731 (SLRV…MRKL), 732-754 (KHLE…IGEL), 756-777 (HLRI…IREL), 778-800 (QHLH…VGKL), 802-823 (NLKI…IGEL), 824-848 (NHLQ…QISQ), 945-968 (MPNL…INGT), 979-1002 (DSRV…EFKF), and 1004-1027 (AGPA…VFRC).

This sequence belongs to the disease resistance NB-LRR family. As to quaternary structure, interacts with AVR-Pik through its N-terminal part containing the HMA-like domain. In terms of tissue distribution, constitutively expressed.

In terms of biological role, disease resistance (R) protein that specifically recognizes the AVR-Pik effector avirulence protein from M.oryzae. Resistance proteins guard the plant against pathogens that contain an appropriate avirulence protein via an indirect interaction with this avirulence protein. That triggers a defense system including the hypersensitive response, which restricts the pathogen growth. Contribution of Pikm-2 is required to recognize the effector avirulence protein AVR-Pik. The protein is Disease resistance protein Pikm1-TS of Oryza sativa subsp. japonica (Rice).